Consider the following 311-residue polypeptide: CARD domain-containing protein E10 (311 aa).

A CARD domain is found at 21–110 (IWDVERLCLE…EHLVDLLERA (90 aa)). Disordered stretches follow at residues 125–181 (ESGA…GGVY), 203–230 (GAGR…GGRD), and 243–311 (IPEP…FFCC). Positions 140-152 (EDNSGYTALLPTN) are enriched in polar residues. Gly residues predominate over residues 252–272 (SGGGGRGGGVRYDAGGDGRLG).

It is found in the host cell membrane. Functionally, activates host NF-kappa-B and JNK pathways. Induces hyperphosphorylation and redistribution of host bcl-10 from the cytoplasm to the plasma membrane. The inhibitory effect of cellular bcl-10 on NF-kappa-B pathway is then overcome allowing NF-kappa-B activation. This Equus caballus (Horse) protein is CARD domain-containing protein E10 (E10).